A 678-amino-acid polypeptide reads, in one-letter code: Electrogenic aspartate/glutamate antiporter SLC25A12, mitochondrial (678 aa).

The residue at position 2 (Ala2) is an N-acetylalanine. The segment at 2 to 294 (AVKVQTTKRG…TLADIERIAP (293 aa)) is regulatory N-terminal domain. The Mitochondrial intermembrane segment spans residues 2–329 (AVKVQTTKRG…WLQIAESAYR (328 aa)). Ca(2+) is bound by residues Asp65, Thr67, Asp69, Leu71, and Glu76. EF-hand domains are found at residues 65–76 (DQTKDGLISYQE), 86–121 (APDS…TIIH), 125–155 (PFNW…QFLQ), and 157–192 (LQLE…IRSH). The interval 295–310 (LAEGALPYNLAELQRQ) is linker loop domain. A carrier domain region spans residues 320 to 612 (WLQIAESAYR…RWFYIDFGGL (293 aa)). Solcar repeat units lie at residues 324-416 (AESA…VRDK), 424-508 (VPLP…CKLL), and 516-604 (VGGL…LQRW). The helical transmembrane segment at 330–347 (FTLGSVAGAVGATAVYPI) threads the bilayer. At 348–390 (DLVKTRMQNQRGSGSVVGELMYKNSFDCFKKVLRYEGFFGLYR) the chain is on the mitochondrial matrix side. A helical membrane pass occupies residues 391-410 (GLIPQLIGVAPEKAIKLTVN). Over 411 to 433 (DFVRDKFTRRDGSVPLPAEVLAG) the chain is Mitochondrial intermembrane. A helical membrane pass occupies residues 434-447 (GCAGGSQVIFTNPL). The Mitochondrial matrix portion of the chain corresponds to 448 to 482 (EIVKIRLQVAGEITTGPRVSALNVLRDLGIFGLYK). A helical transmembrane segment spans residues 483–502 (GAKACFLRDIPFSAIYFPVY). Residues 503–521 (AHCKLLLADENGHVGGLNL) lie on the Mitochondrial intermembrane side of the membrane. A helical transmembrane segment spans residues 522–539 (LAAGAMAGVPAASLVTPA). Residues 540–578 (DVIKTRLQVAARAGQTTYSGVIDCFRKILREEGPSAFWK) are Mitochondrial matrix-facing. The helical transmembrane segment at 579 to 598 (GTAARVFRSSPQFGVTLVTY) threads the bilayer. Over 599 to 678 (ELLQRWFYID…QPKAAVAATQ (80 aa)) the chain is Mitochondrial intermembrane. Positions 613–675 (KPAGSEPTPK…AVVQPKAAVA (63 aa)) are C-terminal domain.

This sequence belongs to the mitochondrial carrier (TC 2.A.29) family. Homodimer (via N-terminus). As to expression, expressed predominantly in the heart and skeletal muscle, weakly in brain and kidney.

The protein resides in the mitochondrion inner membrane. The catalysed reaction is L-aspartate(in) + L-glutamate(out) + H(+)(out) = L-aspartate(out) + L-glutamate(in) + H(+)(in). The enzyme catalyses 3-sulfino-L-alanine(out) + L-glutamate(in) + H(+)(in) = 3-sulfino-L-alanine(in) + L-glutamate(out) + H(+)(out). It carries out the reaction 3-sulfino-L-alanine(out) + L-aspartate(in) = 3-sulfino-L-alanine(in) + L-aspartate(out). With respect to regulation, activated by calcium-binding in the mitochondrial intermembrane space. Inhibited by pyridoxal 5'-phosphate, bathophenathroline, mercurials, diethyl pyrocarbonate and N-ethylmaleimide. In terms of biological role, mitochondrial electrogenic aspartate/glutamate antiporter that favors efflux of aspartate and entry of glutamate and proton within the mitochondria as part of the malate-aspartate shuttle. Also mediates the uptake of L-cysteinesulfinate (3-sulfino-L-alanine) by mitochondria in exchange of L-glutamate and proton. Can also exchange L-cysteinesulfinate with aspartate in their anionic form without any proton translocation. Lacks transport activity towards L-glutamine or gamma-aminobutyric acid (GABA). This Homo sapiens (Human) protein is Electrogenic aspartate/glutamate antiporter SLC25A12, mitochondrial.